A 921-amino-acid chain; its full sequence is Inner nuclear membrane protein Man1 (921 aa).

Residues 7–51 (AAAPQQLSDEELFSQLRRYGLSPGPVTESTRPVYLKKLKKLREEE) enclose the LEM domain. Serine 28 carries the post-translational modification Phosphoserine. Disordered regions lie at residues 47-97 (LREE…AYLR), 136-357 (SSDE…GGCG), and 374-395 (LAPL…PTGP). Composition is skewed to low complexity over residues 53 to 62 (QQQQQQQQQQ) and 72 to 85 (TRNS…TAMG). A phosphoserine mark is found at serine 136, serine 137, and serine 140. Over residues 217–237 (AAEDADEELADGEDRDPEAEE) the composition is skewed to acidic residues. Phosphoserine is present on residues serine 261, serine 263, and serine 287. A compositionally biased stretch (acidic residues) spans 263-275 (SEEEEEEGEEDGD). Positions 308-317 (SGGSRQETSV) are enriched in polar residues. Gly residues predominate over residues 348 to 357 (PGGGGGGGCG). Serine 412 carries the post-translational modification Phosphoserine. 2 helical membrane-spanning segments follow: residues 486-506 (MFLL…YLGM) and 637-657 (AFIT…LVCV). The tract at residues 709 to 921 (VRDSLIQPQD…TGLANSQGSS (213 aa)) is interaction with SMAD1, SMAD2, SMAD3 and SMAD5. A DNA-binding region spans residues 717–736 (QDRKKMKKVWDRAVDFLAAN). The residue at position 787 (serine 787) is a Phosphoserine. Threonine 893 bears the Phosphothreonine mark. Residue serine 921 is modified to Phosphoserine.

Interacts with SMAD1, SMAD2, SMAD3 and SMAD5. Binds to both phosphorylated and unphosphorylated R-SMADS.

Its subcellular location is the nucleus inner membrane. Can function as a specific repressor of TGF-beta, activin, and BMP signaling through its interaction with the R-SMAD proteins. Antagonizes TGF-beta-induced cell proliferation arrest. This chain is Inner nuclear membrane protein Man1 (Lemd3), found in Mus musculus (Mouse).